A 232-amino-acid polypeptide reads, in one-letter code: 7-cyano-7-deazaguanine synthase (232 aa).

Residue 8–18 (LSGGLDSATVL) participates in ATP binding. The Zn(2+) site is built by Cys188, Cys198, Cys201, and Cys204.

Belongs to the QueC family. Zn(2+) serves as cofactor.

It catalyses the reaction 7-carboxy-7-deazaguanine + NH4(+) + ATP = 7-cyano-7-deazaguanine + ADP + phosphate + H2O + H(+). The protein operates within purine metabolism; 7-cyano-7-deazaguanine biosynthesis. Its function is as follows. Catalyzes the ATP-dependent conversion of 7-carboxy-7-deazaguanine (CDG) to 7-cyano-7-deazaguanine (preQ(0)). The protein is 7-cyano-7-deazaguanine synthase of Nitrosospira multiformis (strain ATCC 25196 / NCIMB 11849 / C 71).